We begin with the raw amino-acid sequence, 477 residues long: Mitochondrial adenyl nucleotide antiporter SLC25A24 (477 aa).

The segment at 1 to 173 (MLRWLRDFVL…RFWKHSTGID (173 aa)) is regulatory N-terminal domain. Residues 1 to 197 (MLRWLRDFVL…EKKSGQWWRQ (197 aa)) lie on the Mitochondrial intermembrane side of the membrane. EF-hand domains follow at residues 19–54 (EQPT…LGIP), 55–88 (LGQD…KDHE), 86–121 (DHEK…LGLT), and 122–157 (ISEQ…NPVT). Residues D32, N34, D36, V38, E43, D68, N70, D72, K74, E79, D99, N101, D103, K105, E110, D135, D137, T139, T141, and E146 each coordinate Ca(2+). The linker region stretch occupies residues 159–168 (IEEIIRFWKH). Positions 174-477 (IGDSLTIPDE…MKQTLGVTQK (304 aa)) are C-terminal transmembrane transporter domain. 3 Solcar repeats span residues 192 to 278 (GQWW…YKKL), 286 to 371 (IGTF…LKSY), and 383 to 471 (PGVM…MKQT). A helical transmembrane segment spans residues 198 to 215 (LLAGGIAGAVSRTSTAPL). Residues 216–252 (DRLKIMMQVHGSKSDKMNIFGGFRQMVKEGGIRSLWR) are Mitochondrial matrix-facing. A helical membrane pass occupies residues 253 to 272 (GNGTNVIKIAPETAVKFWAY). At 273–295 (EQYKKLLTEEGQKIGTFERFISG) the chain is on the mitochondrial intermembrane side. A helical transmembrane segment spans residues 296–309 (SMAGATAQTFIYPM). Over 310–345 (EVMKTRLAVGKTGQYSGIYDCAKKILKHEGLGAFYK) the chain is Mitochondrial matrix. An N6-acetyllysine; alternate modification is found at K320. Residue K320 is modified to N6-succinyllysine; alternate. K336 bears the N6-acetyllysine mark. A helical transmembrane segment spans residues 346–365 (GYVPNLLGIIPYAGIDLAVY). The Mitochondrial intermembrane segment spans residues 366 to 388 (ELLKSYWLDNFAKDSVNPGVMVL). Residues 389–406 (LGCGALSSTCGQLASYPL) traverse the membrane as a helical segment. At 407–445 (ALVRTRMQAQAMLEGSPQLNMVGLFRRIISKEGIPGLYR) the chain is on the mitochondrial matrix side. Position 437 is an N6-acetyllysine; alternate (K437). At K437 the chain carries N6-succinyllysine; alternate. Residues 446–465 (GITPNFMKVLPAVGISYVVY) form a helical membrane-spanning segment. Residues 466–477 (ENMKQTLGVTQK) are Mitochondrial intermembrane-facing.

The protein belongs to the mitochondrial carrier (TC 2.A.29) family. In terms of assembly, monomer. Expressed in all tissues tested. Highly expressed in testis, expressed at intermediate level in small intestine and pancreas, and weakly expressed in kidney, spleen, liver, skeletal muscle and heart.

It localises to the mitochondrion inner membrane. It carries out the reaction Mg(2+)(out) + phosphate(in) + ATP(out) = Mg(2+)(in) + phosphate(out) + ATP(in). The enzyme catalyses ADP(out) + phosphate(in) + H(+)(out) = ADP(in) + phosphate(out) + H(+)(in). The catalysed reaction is AMP(out) + phosphate(in) = AMP(in) + phosphate(out). It catalyses the reaction phosphate(in) + ATP(out) + 2 H(+)(out) = phosphate(out) + ATP(in) + 2 H(+)(in). It carries out the reaction dADP(in) + ADP(out) = dADP(out) + ADP(in). The enzyme catalyses Mg(2+)(in) + ADP(out) + ATP(in) + H(+)(out) = Mg(2+)(out) + ADP(in) + ATP(out) + H(+)(in). The catalysed reaction is ADP(out) + diphosphate(in) = ADP(in) + diphosphate(out). It catalyses the reaction dAMP(in) + ADP(out) + H(+)(out) = dAMP(out) + ADP(in) + H(+)(in). It carries out the reaction 3'-AMP(in) + ADP(out) + H(+)(out) = 3'-AMP(out) + ADP(in) + H(+)(in). The enzyme catalyses dAMP(out) + phosphate(in) = dAMP(in) + phosphate(out). The catalysed reaction is 3'-AMP(out) + phosphate(in) = 3'-AMP(in) + phosphate(out). It catalyses the reaction dADP(out) + phosphate(in) + H(+)(out) = dADP(in) + phosphate(out) + H(+)(in). Activated by an increase in cytosolic calcium levels that induce a conformational change of the N-terminal regulatory domain, uncapping the channel and allowing transport. Inhibited by bathophenanthroline, mersalyl, p-hydroxymercuribenzoate, bromcresol purple and tannic acid. Its function is as follows. Electroneutral antiporter that mediates the transport of adenyl nucleotides through the inner mitochondrial membrane. Originally identified as an ATP-magnesium/inorganic phosphate antiporter, it also acts as a broad specificity adenyl nucleotide antiporter. By regulating the mitochondrial matrix adenyl nucleotide pool could adapt to changing cellular energetic demands and indirectly regulate adenyl nucleotide-dependent metabolic pathways. In vitro, a low activity is also observed with guanyl and pyrimidine nucleotides. May play a role in protecting cells against oxidative stress-induced cell death, by buffering calcium levels in the mitochondrial matrix through the formation of calcium-phosphate precipitates. The polypeptide is Mitochondrial adenyl nucleotide antiporter SLC25A24 (Homo sapiens (Human)).